Consider the following 217-residue polypeptide: Adenylate kinase (217 aa).

10–15 (GAGKGT) contacts ATP. Residues 30–59 (STGDMFRAAMKEGTPLGLQAKEYIDRGDLV) are NMP. Residues Thr-31, Arg-36, 57-59 (DLV), 85-88 (GFPR), and Gln-92 each bind AMP. The LID stretch occupies residues 126-163 (GRRICRNCGATYHLVFHPPAQPGVCDKCGGELYQRPDD). An ATP-binding site is contributed by Arg-127. Positions 130 and 133 each coordinate Zn(2+). 136–137 (TY) is a binding site for ATP. Zn(2+) is bound by residues Cys-150 and Cys-153. Residues Arg-160 and Arg-171 each coordinate AMP. Gln-199 is a binding site for ATP.

This sequence belongs to the adenylate kinase family. Monomer.

The protein resides in the cytoplasm. The enzyme catalyses AMP + ATP = 2 ADP. The protein operates within purine metabolism; AMP biosynthesis via salvage pathway; AMP from ADP: step 1/1. Functionally, catalyzes the reversible transfer of the terminal phosphate group between ATP and AMP. Plays an important role in cellular energy homeostasis and in adenine nucleotide metabolism. The protein is Adenylate kinase of Geobacillus thermodenitrificans (strain NG80-2).